Consider the following 422-residue polypeptide: Phytoene synthase 1, chloroplastic (422 aa).

The transit peptide at 1 to 70 (MSSSVAVLWV…NRSRRIGVVS (70 aa)) directs the protein to the chloroplast.

The protein belongs to the phytoene/squalene synthase family. As to quaternary structure, monomer. Interacts with OR. Interacts with ORLIKE.

The protein localises to the plastid. The protein resides in the chloroplast membrane. The enzyme catalyses 2 (2E,6E,10E)-geranylgeranyl diphosphate = 15-cis-phytoene + 2 diphosphate. Its pathway is carotenoid biosynthesis; phytoene biosynthesis; all-trans-phytoene from geranylgeranyl diphosphate: step 1/1. Functionally, catalyzes the reaction from prephytoene diphosphate to phytoene. The polypeptide is Phytoene synthase 1, chloroplastic (Arabidopsis thaliana (Mouse-ear cress)).